A 713-amino-acid polypeptide reads, in one-letter code: Phosphoribosylformylglycinamidine synthase subunit PurL (713 aa).

Positions 1-17 (MSLSPSDRELVTEELGR) are enriched in basic and acidic residues. Residues 1–20 (MSLSPSDRELVTEELGREPT) are disordered. His-34 is a catalytic residue. Residue Tyr-37 participates in ATP binding. Residue Glu-85 participates in Mg(2+) binding. Substrate contacts are provided by residues 86–89 (SHNH) and Arg-108. His-87 acts as the Proton acceptor in catalysis. Asp-109 is a Mg(2+) binding site. Position 233 (Gln-233) interacts with substrate. Mg(2+) is bound at residue Asp-261. A substrate-binding site is contributed by 305 to 307 (ESQ). ATP contacts are provided by Asp-480 and Gly-517. Mg(2+) is bound at residue Asn-518. Ser-520 serves as a coordination point for substrate.

The protein belongs to the FGAMS family. Monomer. Part of the FGAM synthase complex composed of 1 PurL, 1 PurQ and 2 PurS subunits.

Its subcellular location is the cytoplasm. It catalyses the reaction N(2)-formyl-N(1)-(5-phospho-beta-D-ribosyl)glycinamide + L-glutamine + ATP + H2O = 2-formamido-N(1)-(5-O-phospho-beta-D-ribosyl)acetamidine + L-glutamate + ADP + phosphate + H(+). The protein operates within purine metabolism; IMP biosynthesis via de novo pathway; 5-amino-1-(5-phospho-D-ribosyl)imidazole from N(2)-formyl-N(1)-(5-phospho-D-ribosyl)glycinamide: step 1/2. Its function is as follows. Part of the phosphoribosylformylglycinamidine synthase complex involved in the purines biosynthetic pathway. Catalyzes the ATP-dependent conversion of formylglycinamide ribonucleotide (FGAR) and glutamine to yield formylglycinamidine ribonucleotide (FGAM) and glutamate. The FGAM synthase complex is composed of three subunits. PurQ produces an ammonia molecule by converting glutamine to glutamate. PurL transfers the ammonia molecule to FGAR to form FGAM in an ATP-dependent manner. PurS interacts with PurQ and PurL and is thought to assist in the transfer of the ammonia molecule from PurQ to PurL. The chain is Phosphoribosylformylglycinamidine synthase subunit PurL from Natronomonas pharaonis (strain ATCC 35678 / DSM 2160 / CIP 103997 / JCM 8858 / NBRC 14720 / NCIMB 2260 / Gabara) (Halobacterium pharaonis).